The following is a 414-amino-acid chain: Esterase FrsA (414 aa).

This sequence belongs to the FrsA family.

It catalyses the reaction a carboxylic ester + H2O = an alcohol + a carboxylate + H(+). Functionally, catalyzes the hydrolysis of esters. In Salmonella choleraesuis (strain SC-B67), this protein is Esterase FrsA.